The chain runs to 127 residues: Large ribosomal subunit protein bL12 (127 aa).

This sequence belongs to the bacterial ribosomal protein bL12 family. In terms of assembly, homodimer. Part of the ribosomal stalk of the 50S ribosomal subunit. Forms a multimeric L10(L12)X complex, where L10 forms an elongated spine to which 2 to 4 L12 dimers bind in a sequential fashion. Binds GTP-bound translation factors.

Forms part of the ribosomal stalk which helps the ribosome interact with GTP-bound translation factors. Is thus essential for accurate translation. This is Large ribosomal subunit protein bL12 from Streptomyces griseus subsp. griseus (strain JCM 4626 / CBS 651.72 / NBRC 13350 / KCC S-0626 / ISP 5235).